The sequence spans 251 residues: NADPH-dependent oxidoreductase (251 aa).

The protein belongs to the flavin oxidoreductase frp family. FMN serves as cofactor.

In terms of biological role, reduces FMN, organic nitro compounds and disulfide DTNB. Involved in maintenance of the cellular redox state and the disulfide stress response. The sequence is that of NADPH-dependent oxidoreductase (nfrA) from Staphylococcus aureus (strain Mu50 / ATCC 700699).